The following is a 928-amino-acid chain: 2-oxoglutarate dehydrogenase E1 component (928 aa).

Belongs to the alpha-ketoglutarate dehydrogenase family. As to quaternary structure, homodimer. Part of the 2-oxoglutarate dehydrogenase (OGDH) complex composed of E1 (2-oxoglutarate dehydrogenase), E2 (dihydrolipoamide succinyltransferase) and E3 (dihydrolipoamide dehydrogenase); the complex contains multiple copies of the three enzymatic components (E1, E2 and E3). Thiamine diphosphate is required as a cofactor.

The catalysed reaction is N(6)-[(R)-lipoyl]-L-lysyl-[protein] + 2-oxoglutarate + H(+) = N(6)-[(R)-S(8)-succinyldihydrolipoyl]-L-lysyl-[protein] + CO2. Functionally, E1 component of the 2-oxoglutarate dehydrogenase (OGDH) complex which catalyzes the decarboxylation of 2-oxoglutarate, the first step in the conversion of 2-oxoglutarate to succinyl-CoA and CO(2). In Rickettsia conorii (strain ATCC VR-613 / Malish 7), this protein is 2-oxoglutarate dehydrogenase E1 component (sucA).